The following is a 151-amino-acid chain: Regulatory protein RecX (151 aa).

The protein belongs to the RecX family.

Its subcellular location is the cytoplasm. Its function is as follows. Modulates RecA activity. In Herminiimonas arsenicoxydans, this protein is Regulatory protein RecX.